The sequence spans 28 residues: Ornatin-D (28 aa).

It belongs to the ornatin family.

It localises to the secreted. Functionally, potent inhibitor of fibrinogen interaction with platelet receptors expressed on glycoprotein IIb-IIIa complex. May prevent blood from clotting during either feeding and/or storage of ingested blood. The polypeptide is Ornatin-D (Placobdella ornata (Turtle leech)).